A 391-amino-acid chain; its full sequence is MENTTNRNTAGVLTSSNGNFATNSVAASTPKRSKSARRKTFKCTGYDGCTMSFTRAEHLARHIRKHTGEKPFQCPACLKFFSRVDNLKQHRESVHAHKNHHSTSSHQRKPSSSSLSSSSSASSSSSASSSTSYSDPYRKTNINSGNMPMMAENEKAPQIIHSSPEFITSTRSIPPISPRSIYNTQRQQQHQQQQHQQAPYYFPSHPITDSYYQYPLPSNNNTINYLPSVDVQYPLNVSPSSTSHPASEVIISSFPPRSMPSTSFKYKDSADFQARTTMNKYNIRPSNINVNTSNINNHLDSFSPPFSPSTTVAEAKPIILPQYQQAFSQPPNGNKNNNMSSSKNGGKGGENFKNTDDRNDNNNKKRSETLSESDISVNTNKKRLSVDYILT.

Polar residues predominate over residues 1–27 (MENTTNRNTAGVLTSSNGNFATNSVAA). The interval 1–37 (MENTTNRNTAGVLTSSNGNFATNSVAASTPKRSKSAR) is disordered. 2 C2H2-type zinc fingers span residues 41-66 (FKCT…IRKH) and 72-95 (FQCP…ESVH). Residues 91–149 (RESVHAHKNHHSTSSHQRKPSSSSLSSSSSASSSSSASSSTSYSDPYRKTNINSGNMPM) form a disordered region. The segment covering 96 to 109 (AHKNHHSTSSHQRK) has biased composition (basic residues). Residues 110–134 (PSSSSLSSSSSASSSSSASSSTSYS) are compositionally biased toward low complexity. Phosphoserine occurs at positions 162 and 163. The tract at residues 326–374 (AFSQPPNGNKNNNMSSSKNGGKGGENFKNTDDRNDNNNKKRSETLSESD) is disordered. Residues 332-344 (NGNKNNNMSSSKN) are compositionally biased toward low complexity. Basic and acidic residues predominate over residues 353 to 369 (KNTDDRNDNNNKKRSET).

It is found in the nucleus. Its function is as follows. Transcription factor that participates in the transcriptional activation of glucose-repressed genes during exponential growth in non-fermentable carbon conditions. Also involved in salt-stress response. The sequence is that of Nutrient and stress factor 1 (USV1) from Saccharomyces cerevisiae (strain ATCC 204508 / S288c) (Baker's yeast).